The sequence spans 173 residues: MAIILGIDPGSRITGYGVIQCNGRSQIYLGSGCIRTASDDFPYRLKQIFDGVSEIIRQYQPNFFAIERVFLAKNADSALKLGQARGAAIVAATNADLPVAEYSATQIKSAVVGTGKAEKTQVQHMVQQILKLPAAPQADAADALGVAICHFHTSQSLVSLGGRANTRTYGRYR.

Residues aspartate 8, glutamate 67, and aspartate 139 contribute to the active site. Residues aspartate 8, glutamate 67, and aspartate 139 each coordinate Mg(2+).

This sequence belongs to the RuvC family. As to quaternary structure, homodimer which binds Holliday junction (HJ) DNA. The HJ becomes 2-fold symmetrical on binding to RuvC with unstacked arms; it has a different conformation from HJ DNA in complex with RuvA. In the full resolvosome a probable DNA-RuvA(4)-RuvB(12)-RuvC(2) complex forms which resolves the HJ. Mg(2+) serves as cofactor.

Its subcellular location is the cytoplasm. The enzyme catalyses Endonucleolytic cleavage at a junction such as a reciprocal single-stranded crossover between two homologous DNA duplexes (Holliday junction).. Its function is as follows. The RuvA-RuvB-RuvC complex processes Holliday junction (HJ) DNA during genetic recombination and DNA repair. Endonuclease that resolves HJ intermediates. Cleaves cruciform DNA by making single-stranded nicks across the HJ at symmetrical positions within the homologous arms, yielding a 5'-phosphate and a 3'-hydroxyl group; requires a central core of homology in the junction. The consensus cleavage sequence is 5'-(A/T)TT(C/G)-3'. Cleavage occurs on the 3'-side of the TT dinucleotide at the point of strand exchange. HJ branch migration catalyzed by RuvA-RuvB allows RuvC to scan DNA until it finds its consensus sequence, where it cleaves and resolves the cruciform DNA. The polypeptide is Crossover junction endodeoxyribonuclease RuvC (Shewanella woodyi (strain ATCC 51908 / MS32)).